A 211-amino-acid chain; its full sequence is Imidazole glycerol phosphate synthase subunit HisH (211 aa).

The 211-residue stretch at 1 to 211 (MIGIIDYGMG…ASIIEGKGSM (211 aa)) folds into the Glutamine amidotransferase type-1 domain. The Nucleophile role is filled by Cys79. Active-site residues include His186 and Glu188.

Heterodimer of HisH and HisF.

The protein resides in the cytoplasm. The catalysed reaction is 5-[(5-phospho-1-deoxy-D-ribulos-1-ylimino)methylamino]-1-(5-phospho-beta-D-ribosyl)imidazole-4-carboxamide + L-glutamine = D-erythro-1-(imidazol-4-yl)glycerol 3-phosphate + 5-amino-1-(5-phospho-beta-D-ribosyl)imidazole-4-carboxamide + L-glutamate + H(+). It carries out the reaction L-glutamine + H2O = L-glutamate + NH4(+). The protein operates within amino-acid biosynthesis; L-histidine biosynthesis; L-histidine from 5-phospho-alpha-D-ribose 1-diphosphate: step 5/9. In terms of biological role, IGPS catalyzes the conversion of PRFAR and glutamine to IGP, AICAR and glutamate. The HisH subunit catalyzes the hydrolysis of glutamine to glutamate and ammonia as part of the synthesis of IGP and AICAR. The resulting ammonia molecule is channeled to the active site of HisF. The protein is Imidazole glycerol phosphate synthase subunit HisH of Geobacillus sp. (strain WCH70).